We begin with the raw amino-acid sequence, 436 residues long: Glutamate-1-semialdehyde 2,1-aminomutase (436 aa).

Lys-272 is modified (N6-(pyridoxal phosphate)lysine).

The protein belongs to the class-III pyridoxal-phosphate-dependent aminotransferase family. HemL subfamily. In terms of assembly, homodimer. It depends on pyridoxal 5'-phosphate as a cofactor.

Its subcellular location is the cytoplasm. The catalysed reaction is (S)-4-amino-5-oxopentanoate = 5-aminolevulinate. It functions in the pathway porphyrin-containing compound metabolism; protoporphyrin-IX biosynthesis; 5-aminolevulinate from L-glutamyl-tRNA(Glu): step 2/2. It participates in porphyrin-containing compound metabolism; chlorophyll biosynthesis. In Methylibium petroleiphilum (strain ATCC BAA-1232 / LMG 22953 / PM1), this protein is Glutamate-1-semialdehyde 2,1-aminomutase.